The sequence spans 316 residues: ATP synthase gamma chain (316 aa).

This sequence belongs to the ATPase gamma chain family. In terms of assembly, F-type ATPases have 2 components, CF(1) - the catalytic core - and CF(0) - the membrane proton channel. CF(1) has five subunits: alpha(3), beta(3), gamma(1), delta(1), epsilon(1). CF(0) has three main subunits: a, b and c.

It is found in the cellular thylakoid membrane. Functionally, produces ATP from ADP in the presence of a proton gradient across the membrane. The gamma chain is believed to be important in regulating ATPase activity and the flow of protons through the CF(0) complex. In Prochlorococcus marinus (strain MIT 9301), this protein is ATP synthase gamma chain.